Here is a 370-residue protein sequence, read N- to C-terminus: Glutamate 5-kinase (370 aa).

K11 lines the ATP pocket. Substrate is bound by residues S52, D139, and N151. ATP contacts are provided by residues 171 to 172 (TD) and 213 to 219 (TGGMATK). The PUA domain occupies 278 to 356 (TGKLLLDAGA…DQIVQILGYE (79 aa)).

The protein belongs to the glutamate 5-kinase family.

It localises to the cytoplasm. The enzyme catalyses L-glutamate + ATP = L-glutamyl 5-phosphate + ADP. It participates in amino-acid biosynthesis; L-proline biosynthesis; L-glutamate 5-semialdehyde from L-glutamate: step 1/2. In terms of biological role, catalyzes the transfer of a phosphate group to glutamate to form L-glutamate 5-phosphate. The chain is Glutamate 5-kinase from Synechococcus sp. (strain ATCC 27144 / PCC 6301 / SAUG 1402/1) (Anacystis nidulans).